Here is a 232-residue protein sequence, read N- to C-terminus: Enolase-phosphatase E1 (232 aa).

It belongs to the HAD-like hydrolase superfamily. MasA/MtnC family. As to quaternary structure, monomer. The cofactor is Mg(2+).

The enzyme catalyses 5-methylsulfanyl-2,3-dioxopentyl phosphate + H2O = 1,2-dihydroxy-5-(methylsulfanyl)pent-1-en-3-one + phosphate. The protein operates within amino-acid biosynthesis; L-methionine biosynthesis via salvage pathway; L-methionine from S-methyl-5-thio-alpha-D-ribose 1-phosphate: step 3/6. It functions in the pathway amino-acid biosynthesis; L-methionine biosynthesis via salvage pathway; L-methionine from S-methyl-5-thio-alpha-D-ribose 1-phosphate: step 4/6. Bifunctional enzyme that catalyzes the enolization of 2,3-diketo-5-methylthiopentyl-1-phosphate (DK-MTP-1-P) into the intermediate 2-hydroxy-3-keto-5-methylthiopentenyl-1-phosphate (HK-MTPenyl-1-P), which is then dephosphorylated to form the acireductone 1,2-dihydroxy-3-keto-5-methylthiopentene (DHK-MTPene). In Xanthomonas axonopodis pv. citri (strain 306), this protein is Enolase-phosphatase E1.